Here is a 245-residue protein sequence, read N- to C-terminus: Small ribosomal subunit protein uS2 (245 aa).

The protein belongs to the universal ribosomal protein uS2 family.

The polypeptide is Small ribosomal subunit protein uS2 (Pseudomonas fluorescens (strain Pf0-1)).